A 663-amino-acid polypeptide reads, in one-letter code: ATP-dependent zinc metalloprotease FtsH (663 aa).

At 1 to 12 (MNKKETNTSWWR) the chain is on the stromal side. Residues 13–33 (IILISLGISIICILAAFLAMK) form a helical membrane-spanning segment. Topologically, residues 34–135 (DGFFVLENNT…HPPKLDIFKT (102 aa)) are lumenal. A helical membrane pass occupies residues 136 to 156 (ISDTLGSLIVPGLVVAVFYLF). Over 157-663 (LERANNNNNN…KIYESKFPKK (507 aa)) the chain is Stromal. Residues 165–184 (NNNSNGSPFGPGGGPNQNMR) are disordered. ATP is bound at residue 244–251 (GPPGTGKT). Position 465 (His-465) interacts with Zn(2+). Glu-466 is a catalytic residue. 2 residues coordinate Zn(2+): His-469 and Asp-543.

The protein in the central section; belongs to the AAA ATPase family. This sequence in the C-terminal section; belongs to the peptidase M41 family. Homohexamer. The cofactor is Zn(2+).

Its subcellular location is the plastid. It is found in the chloroplast thylakoid membrane. Its function is as follows. Acts as a processive, ATP-dependent zinc metallopeptidase. This chain is ATP-dependent zinc metalloprotease FtsH, found in Heterosigma akashiwo (strain NIES-293 / 8280G21-1).